A 175-amino-acid chain; its full sequence is MEKFTDLNYTLSVITLMNSTLHTILEDPGMAYFPYIASVLTVLFTLHKASIPTMKIALKTSKCSYKVVKYCIVTILNTLLKLAGYKEQITTKDEIEKQMDRVVKEMRRQLEMIDKLTTREIEQVELLKRIYDKLIVRSTGEIDMTKEINQKNVRTLEEWESGKNPYEPKEVTAAM.

Residues 1-28 (MEKFTDLNYTLSVITLMNSTLHTILEDP) lie on the Lumenal side of the membrane. Asparagine 8 and asparagine 18 each carry an N-linked (GlcNAc...) asparagine; by host glycan. Residues 29-51 (GMAYFPYIASVLTVLFTLHKASI) traverse the membrane as a helical; Signal-anchor for type III membrane protein segment. Residues 52–175 (PTMKIALKTS…YEPKEVTAAM (124 aa)) are Cytoplasmic-facing. Residues glutamate 120 and glutamine 123 each contribute to the Ca(2+) site.

This sequence belongs to the rotavirus NSP4 family. Homotetramer. Interacts with the immature particle in the viroplasm. Interacts with host CAV1, early and late in infection. Interacts with host integrin ITGA1/ITGB1 heterodimer. Interacts with host integrin ITGA2/ITGB1 heterodimer. Interaction with microtubules blocks trafficking to the Golgi apparatus. Post-translationally, the N-glycosyl content is primarily Man(9)GlcNAc, with a small amount of Man(8)GlcNAc.

The protein resides in the host rough endoplasmic reticulum membrane. Its subcellular location is the host membrane. The protein localises to the host caveola. It is found in the secreted. Functionally, plays an essential role in the virus replication cycle by acting as a viroporin. Creates a pore in the host endoplasmic reticulum and as a consequence releases Ca(2+) in the cytoplasm of infected cell. In turn, high levels of cytoplasmic calcium trigger membrane trafficking and transport of viral ER-associated proteins to viroplasms, sites of viral genome replication and immature particle assembly. Its function is as follows. The secreted form acts as an enterotoxin that causes phospholipase C-dependent elevation of the intracellular calcium concentration in host intestinal mucosa cells. Increased concentration of intracellular calcium disrupts the cytoskeleton and the tight junctions, raising the paracellular permeability. Potentiates chloride ion secretion through a calcium ion-dependent signaling pathway, inducing age-dependent diarrhea. To perform this enterotoxigenic role in vivo, NSP4 is released from infected enterocytes in a soluble form capable of diffusing within the intestinal lumen and interacting with host plasma membrane receptors on neighboring epithelial cells such as integrins ITGA1/ITGB1 and ITGA2/ITGB1. The polypeptide is Non-structural glycoprotein 4 (Homo sapiens (Human)).